The primary structure comprises 197 residues: Thymidylate kinase (197 aa).

Position 7–14 (G7–S14) interacts with ATP.

Belongs to the thymidylate kinase family.

The enzyme catalyses dTMP + ATP = dTDP + ADP. Functionally, phosphorylation of dTMP to form dTDP in both de novo and salvage pathways of dTTP synthesis. The chain is Thymidylate kinase from Thermotoga petrophila (strain ATCC BAA-488 / DSM 13995 / JCM 10881 / RKU-1).